The sequence spans 702 residues: Ribosomal RNA large subunit methyltransferase K/L (702 aa).

In terms of domain architecture, THUMP spans 43 to 154 (LVYQSLMWSR…KETASIALDL (112 aa)).

Belongs to the methyltransferase superfamily. RlmKL family.

Its subcellular location is the cytoplasm. The catalysed reaction is guanosine(2445) in 23S rRNA + S-adenosyl-L-methionine = N(2)-methylguanosine(2445) in 23S rRNA + S-adenosyl-L-homocysteine + H(+). The enzyme catalyses guanosine(2069) in 23S rRNA + S-adenosyl-L-methionine = N(2)-methylguanosine(2069) in 23S rRNA + S-adenosyl-L-homocysteine + H(+). Functionally, specifically methylates the guanine in position 2445 (m2G2445) and the guanine in position 2069 (m7G2069) of 23S rRNA. The sequence is that of Ribosomal RNA large subunit methyltransferase K/L from Escherichia coli O1:K1 / APEC.